Consider the following 697-residue polypeptide: Glycine--tRNA ligase beta subunit (697 aa).

It belongs to the class-II aminoacyl-tRNA synthetase family. In terms of assembly, tetramer of two alpha and two beta subunits.

The protein resides in the cytoplasm. It carries out the reaction tRNA(Gly) + glycine + ATP = glycyl-tRNA(Gly) + AMP + diphosphate. This is Glycine--tRNA ligase beta subunit from Cereibacter sphaeroides (strain ATCC 17023 / DSM 158 / JCM 6121 / CCUG 31486 / LMG 2827 / NBRC 12203 / NCIMB 8253 / ATH 2.4.1.) (Rhodobacter sphaeroides).